We begin with the raw amino-acid sequence, 492 residues long: T-box transcription factor TBX5-A (492 aa).

A disordered region spans residues 1-43 (MADSEDTFRLQNSPSDSEPKDLQNEGKSDKQNAAVSKSPSSQT). Basic and acidic residues predominate over residues 17-30 (SEPKDLQNEGKSDK). Polar residues predominate over residues 31-43 (QNAAVSKSPSSQT). The segment at residues 62 to 237 (LWTKFHEVGT…NNPFAKGFRG (176 aa)) is a DNA-binding region (T-box). The tract at residues 331-352 (AGEHPYKKPYVESSSSEDDHYY) is disordered.

Monomer. Homodimer (via the T-box); binds DNA as homodimer. As to expression, expressed in the dorsal optic cup of developing eye, pectoral fin buds and heart. At 31 hpf, when the pectoral fin buds have begun bulging outwards, restricted expression is detected throughout the mesenchyme of the early fin buds and these high levels of expression continue until later stages.

It is found in the nucleus. It localises to the cytoplasm. In terms of biological role, required for pectoral fin formation. Together with tbx5b, involved in eye and heart development. Required for the looping stage of heart development. May bind to the core DNA motif of promoters. The chain is T-box transcription factor TBX5-A (tbx5a) from Danio rerio (Zebrafish).